A 139-amino-acid chain; its full sequence is Transcription antitermination protein NusB (139 aa).

This sequence belongs to the NusB family.

Its function is as follows. Involved in transcription antitermination. Required for transcription of ribosomal RNA (rRNA) genes. Binds specifically to the boxA antiterminator sequence of the ribosomal RNA (rrn) operons. The polypeptide is Transcription antitermination protein NusB (Klebsiella pneumoniae (strain 342)).